The sequence spans 153 residues: 3-hydroxyacyl-[acyl-carrier-protein] dehydratase FabZ (153 aa).

His-57 is a catalytic residue.

It belongs to the thioester dehydratase family. FabZ subfamily.

The protein localises to the cytoplasm. It catalyses the reaction a (3R)-hydroxyacyl-[ACP] = a (2E)-enoyl-[ACP] + H2O. Involved in unsaturated fatty acids biosynthesis. Catalyzes the dehydration of short chain beta-hydroxyacyl-ACPs and long chain saturated and unsaturated beta-hydroxyacyl-ACPs. This Xanthomonas oryzae pv. oryzae (strain MAFF 311018) protein is 3-hydroxyacyl-[acyl-carrier-protein] dehydratase FabZ.